A 148-amino-acid polypeptide reads, in one-letter code: Large ribosomal subunit protein uL15 (148 aa).

Basic residues predominate over residues 1–28; the sequence is MIRRRKKVRKLRGSHTHGWGCKKKHRGG. The interval 1-43 is disordered; the sequence is MIRRRKKVRKLRGSHTHGWGCKKKHRGGGSKGGRGMAGTGKRK. Over residues 29–38 the composition is skewed to gly residues; it reads GSKGGRGMAG.

It belongs to the universal ribosomal protein uL15 family. As to quaternary structure, part of the 50S ribosomal subunit.

Binds to the 23S rRNA. This is Large ribosomal subunit protein uL15 from Thermococcus kodakarensis (strain ATCC BAA-918 / JCM 12380 / KOD1) (Pyrococcus kodakaraensis (strain KOD1)).